Consider the following 152-residue polypeptide: Avidin (152 aa).

The signal sequence occupies residues 1–24 (MVHATSPLLLLLLLSLALVAPGLS). Positions 26-149 (RKCSLTGKWT…GINIFTRLRT (124 aa)) constitute an Avidin-like domain. Residues C28 and C107 are joined by a disulfide bond. N-linked (GlcNAc...) asparagine glycosylation is present at N41. Y57 is a binding site for biotin.

The protein belongs to the avidin/streptavidin family. In terms of assembly, homotetramer. Post-translationally, N-linked glycan at Asn-41 consists of GlcNAc(beta1-2)Man(alpha1-3)[GlcNAc(beta1-4)][Man(alpha1-?)Man(alpha1-6)] Man(beta1-4)GlcNAc(beta1-4)GlcNAc. As to expression, synthesized in hen oviduct and concentrated in egg white (where it represents 0.05% of the total protein).

The protein resides in the secreted. Functionally, the biological function of avidin is not known. Forms a strong non-covalent specific complex with biotin (one molecule of biotin per subunit of avidin). The chain is Avidin (AVD) from Gallus gallus (Chicken).